The primary structure comprises 488 residues: Protein nucleotidyltransferase YdiU (488 aa).

ATP-binding residues include G90, G92, R93, K113, D125, G126, R176, and R183. D252 (proton acceptor) is an active-site residue. The Mg(2+) site is built by N253 and D262. Residue D262 participates in ATP binding.

Belongs to the SELO family. Mg(2+) serves as cofactor. Mn(2+) is required as a cofactor.

It carries out the reaction L-seryl-[protein] + ATP = 3-O-(5'-adenylyl)-L-seryl-[protein] + diphosphate. It catalyses the reaction L-threonyl-[protein] + ATP = 3-O-(5'-adenylyl)-L-threonyl-[protein] + diphosphate. The catalysed reaction is L-tyrosyl-[protein] + ATP = O-(5'-adenylyl)-L-tyrosyl-[protein] + diphosphate. The enzyme catalyses L-histidyl-[protein] + UTP = N(tele)-(5'-uridylyl)-L-histidyl-[protein] + diphosphate. It carries out the reaction L-seryl-[protein] + UTP = O-(5'-uridylyl)-L-seryl-[protein] + diphosphate. It catalyses the reaction L-tyrosyl-[protein] + UTP = O-(5'-uridylyl)-L-tyrosyl-[protein] + diphosphate. In terms of biological role, nucleotidyltransferase involved in the post-translational modification of proteins. It can catalyze the addition of adenosine monophosphate (AMP) or uridine monophosphate (UMP) to a protein, resulting in modifications known as AMPylation and UMPylation. This is Protein nucleotidyltransferase YdiU from Thiobacillus denitrificans (strain ATCC 25259 / T1).